A 679-amino-acid chain; its full sequence is UvrABC system protein B (679 aa).

The 388-residue stretch at 25-412 folds into the Helicase ATP-binding domain; sequence EGVNQGQRYQ…DGHLAEQVIR (388 aa). 38 to 45 is an ATP binding site; it reads GATGTGKT. The Beta-hairpin motif lies at 91 to 114; that stretch reads YYDYYQPEAYVPVSDTYIAKTSSI. One can recognise a Helicase C-terminal domain in the interval 429–591; it reads QVDDLLAEIR…IVPRPAGKRA (163 aa). The UVR domain maps to 639-674; sequence PELIDQLETKMKEAAKNLNFEEAASLRDRIKKFRQK.

This sequence belongs to the UvrB family. In terms of assembly, forms a heterotetramer with UvrA during the search for lesions. Interacts with UvrC in an incision complex.

It localises to the cytoplasm. In terms of biological role, the UvrABC repair system catalyzes the recognition and processing of DNA lesions. A damage recognition complex composed of 2 UvrA and 2 UvrB subunits scans DNA for abnormalities. Upon binding of the UvrA(2)B(2) complex to a putative damaged site, the DNA wraps around one UvrB monomer. DNA wrap is dependent on ATP binding by UvrB and probably causes local melting of the DNA helix, facilitating insertion of UvrB beta-hairpin between the DNA strands. Then UvrB probes one DNA strand for the presence of a lesion. If a lesion is found the UvrA subunits dissociate and the UvrB-DNA preincision complex is formed. This complex is subsequently bound by UvrC and the second UvrB is released. If no lesion is found, the DNA wraps around the other UvrB subunit that will check the other stand for damage. The sequence is that of UvrABC system protein B from Prochlorococcus marinus (strain MIT 9313).